We begin with the raw amino-acid sequence, 140 residues long: Desampylase (140 aa).

In terms of domain architecture, MPN spans 13 to 133 (TLIIPQHYLR…WILSEKNKIS (121 aa)). E34 (proton donor/acceptor) is an active-site residue. Residues H88, H90, and D101 each contribute to the Zn(2+) site. Positions 88-101 (HSHIACPPIPSGKD) match the JAMM motif motif.

This sequence belongs to the peptidase M67B family. As to quaternary structure, exists in two major states: monomer and homodimer. Both conformational states are catalytically active. Zn(2+) serves as cofactor. In terms of processing, the disulfide bridge probably stabilizes the PfJAMM1 homodimer at the optimal growth temperature of the hyperthermophile.

It carries out the reaction an N(6)-[small archaeal modifier protein]-[protein]-L-lysine + H2O = a [protein]-L-lysine + a [small archaeal modifier protein].. Its activity is regulated as follows. Inhibited by EDTA in vitro. In terms of biological role, metalloprotease that displays desampylase (DSAMP) activity, cleaving ubiquitin-like small archaeal modifier proteins (SAMP1, SAMP2 and SAMP3) from protein conjugates (isopeptide- and linear-linked). Thus, likely regulates sampylation and the pools of 'free' SAMP available for protein modification. In vitro, is also able to cleave non-physiological ubiquitin (Ub) substrates, such as 'Met1-', 'Lys48-', and 'Lys63'-linked Ub dimers (Ub2), and to remove Ub tags from diverse proteins. The polypeptide is Desampylase (Pyrococcus furiosus (strain ATCC 43587 / DSM 3638 / JCM 8422 / Vc1)).